The following is a 260-amino-acid chain: Circadian clock-controlled protein daywake (260 aa).

An N-terminal signal peptide occupies residues 1-25; it reads MQLTGASMFLVWVGLLSWVSCRVDA.

The protein belongs to the TO family. As to expression, epidermis of newly eclosed adults.

Component of the circadian clock or downstream effector of clock function. Required for suppressing daytime sleep (siesta) under ambient environmental temperatures. Part of a heat avoidance mechanism that modulates daytime sleep behavior under different environmental temperatures to minimize the risk of heat exposure. Under cooler ambient temperatures, suppresses daytime sleep (siesta) and thus allows for longer periods of daytime activity. This Drosophila melanogaster (Fruit fly) protein is Circadian clock-controlled protein daywake.